The following is a 505-amino-acid chain: GDP-Man:Man(3)GlcNAc(2)-PP-Dol alpha-1,2-mannosyltransferase (505 aa).

Residues 1–4 (MSTM) lie on the Lumenal side of the membrane. The helical transmembrane segment at 5 to 25 (LWVVVAAVLLFVLPVVRVPML) threads the bilayer. The Cytoplasmic portion of the chain corresponds to 26-130 (DLTRRNIIRW…KWVDGSTWKH (105 aa)). Positions 131–151 (LTLVGQAMGSMLLTIEALLRF) form an intramembrane region, helical. Topologically, residues 152-374 (VPDIWLDTMG…FGINAMWNEH (223 aa)) are cytoplasmic. Positions 375-395 (FGIAVVEYAAAGLISLVHASA) form an intramembrane region, helical. The Cytoplasmic segment spans residues 396–505 (GPLLDIIVPW…EHKTSRLGSN (110 aa)).

It belongs to the glycosyltransferase group 1 family.

The protein resides in the endoplasmic reticulum membrane. It carries out the reaction an alpha-D-Man-(1-&gt;3)-[alpha-D-Man-(1-&gt;6)]-beta-D-Man-(1-&gt;4)-beta-D-GlcNAc-(1-&gt;4)-alpha-D-GlcNAc-diphospho-di-trans,poly-cis-dolichol + 2 GDP-alpha-D-mannose = an alpha-D-Man-(1-&gt;2)-alpha-D-Man-(1-&gt;2)-alpha-D-Man-(1-&gt;3)-[alpha-D-Man-(1-&gt;6)]-beta-D-Man-(1-&gt;4)-beta-D-GlcNAc-(1-&gt;4)-alpha-D-GlcNAc-diphospho-di-trans,poly-cis-dolichol + 2 GDP + 2 H(+). The protein operates within protein modification; protein glycosylation. Functionally, GDP-Man:Man(3)GlcNAc(2)-PP-Dol alpha-1,2-mannosyltransferase that operates in the biosynthetic pathway of dolichol-linked oligosaccharides, the glycan precursors employed in protein asparagine (N)-glycosylation. The assembly of dolichol-linked oligosaccharides begins on the cytosolic side of the endoplasmic reticulum membrane and finishes in its lumen. The sequential addition of sugars to dolichol pyrophosphate produces dolichol-linked oligosaccharides containing fourteen sugars, including two GlcNAcs, nine mannoses and three glucoses. Once assembled, the oligosaccharide is transferred from the lipid to nascent proteins by oligosaccharyltransferases. Catalyzes, on the cytoplasmic face of the endoplasmic reticulum, the addition of the fourth and fifth mannose residues to the dolichol-linked oligosaccharide chain, to produce Man(5)GlcNAc(2)-PP-dolichol core oligosaccharide. This Candida glabrata (strain ATCC 2001 / BCRC 20586 / JCM 3761 / NBRC 0622 / NRRL Y-65 / CBS 138) (Yeast) protein is GDP-Man:Man(3)GlcNAc(2)-PP-Dol alpha-1,2-mannosyltransferase (ALG11).